A 342-amino-acid polypeptide reads, in one-letter code: Farnesyl pyrophosphate synthase 2 (342 aa).

3 residues coordinate isopentenyl diphosphate: Lys-48, Arg-51, and Gln-86. Residues Asp-93 and Asp-97 each contribute to the Mg(2+) site. Arg-102 serves as a coordination point for dimethylallyl diphosphate. Arg-103 serves as a coordination point for isopentenyl diphosphate. Dimethylallyl diphosphate contacts are provided by Lys-190, Thr-191, Gln-229, Lys-246, and Lys-255.

Belongs to the FPP/GGPP synthase family. The cofactor is Mg(2+).

It is found in the cytoplasm. It carries out the reaction isopentenyl diphosphate + dimethylallyl diphosphate = (2E)-geranyl diphosphate + diphosphate. The catalysed reaction is isopentenyl diphosphate + (2E)-geranyl diphosphate = (2E,6E)-farnesyl diphosphate + diphosphate. It participates in isoprenoid biosynthesis; farnesyl diphosphate biosynthesis; farnesyl diphosphate from geranyl diphosphate and isopentenyl diphosphate: step 1/1. The protein operates within isoprenoid biosynthesis; geranyl diphosphate biosynthesis; geranyl diphosphate from dimethylallyl diphosphate and isopentenyl diphosphate: step 1/1. Functionally, catalyzes the sequential condensation of isopentenyl pyrophosphate with the allylic pyrophosphates, dimethylallyl pyrophosphate, and then with the resultant geranylpyrophosphate to the ultimate product farnesyl pyrophosphate. This chain is Farnesyl pyrophosphate synthase 2 (FPS2), found in Parthenium argentatum (Guayule rubber plant).